The primary structure comprises 243 residues: Probable septum site-determining protein MinC (243 aa).

The protein belongs to the MinC family. In terms of assembly, interacts with MinD and FtsZ.

In terms of biological role, cell division inhibitor that blocks the formation of polar Z ring septums. Rapidly oscillates between the poles of the cell to destabilize FtsZ filaments that have formed before they mature into polar Z rings. Prevents FtsZ polymerization. In Wigglesworthia glossinidia brevipalpis, this protein is Probable septum site-determining protein MinC.